The following is a 301-amino-acid chain: Pyridoxal 5'-phosphate synthase subunit Pdx1 (301 aa).

Residue Asp-26 participates in D-ribose 5-phosphate binding. Catalysis depends on Lys-83, which acts as the Schiff-base intermediate with D-ribose 5-phosphate. Gly-155 contacts D-ribose 5-phosphate. Arg-167 contacts D-glyceraldehyde 3-phosphate. D-ribose 5-phosphate-binding positions include Gly-216 and 237 to 238; that span reads GS.

Belongs to the PdxS/SNZ family. In terms of assembly, homohexamer and homododecamer. In the presence of Pdx2, forms a dodecamer of heterodimers.

The protein localises to the cytoplasm. The enzyme catalyses aldehydo-D-ribose 5-phosphate + D-glyceraldehyde 3-phosphate + L-glutamine = pyridoxal 5'-phosphate + L-glutamate + phosphate + 3 H2O + H(+). It functions in the pathway cofactor biosynthesis; pyridoxal 5'-phosphate biosynthesis. Catalyzes the formation of pyridoxal 5'-phosphate from ribose 5-phosphate (RBP), glyceraldehyde 3-phosphate (G3P) and ammonia. The ammonia is provided by Pdx2. Can also use ribulose 5-phosphate and dihydroxyacetone phosphate as substrates, resulting from enzyme-catalyzed isomerization of RBP and G3P, respectively. The polypeptide is Pyridoxal 5'-phosphate synthase subunit Pdx1 (pdx1) (Plasmodium falciparum (isolate 3D7)).